The chain runs to 1081 residues: Dyslexia-associated protein KIAA0319 homolog (1081 aa).

An N-terminal signal peptide occupies residues 1–22 (MVSPPGVLSSLLLLAAMAGGSS). The 77-residue stretch at 23–99 (QQCSEGRTYS…PRTTGPIRSY (77 aa)) folds into the MANSC domain. Over 23–964 (QQCSEGRTYS…WDGESNCEWS (942 aa)) the chain is Extracellular. Disordered regions lie at residues 141–160 (LPFL…SDDY), 168–216 (LQPS…DLTP), and 228–298 (NEST…TTVE). Composition is skewed to polar residues over residues 197–209 (ASAT…ASTE), 228–253 (NEST…TASP), and 283–298 (HNPS…TTVE). PKD domains lie at 345–436 (AVSA…VMPA), 444–533 (VAIV…IRGS), 539–629 (VANA…VQAE), 630–723 (NNQA…VKKE), and 729–820 (RAQA…VLPD). 2 N-linked (GlcNAc...) asparagine glycosylation sites follow: Asn430 and Asn522. Residues 965 to 985 (VFYVAALALTLTVLTGAVTWV) form a helical membrane-spanning segment. Topologically, residues 986 to 1081 (CICCCRRRKR…VSFGYYSKDR (96 aa)) are cytoplasmic. The Endocytosis signal motif lies at 1004-1007 (YTIL).

As to quaternary structure, homodimer. Interacts with AP2M1; required for clathrin-mediated endocytosis. In terms of processing, N-glycosylated. Post-translationally, O-glycosylated. Shedding of the extracellular domain and intramembrane cleavage produce several proteolytic products. The intramembrane cleavage releases a soluble cytoplasmic polypeptide that translocates to the nucleolus. As to expression, highly expressed during development in ventricular zone, intermediate zone, cortical plate, striatum, hippocampus, and brain stem.

It localises to the cell membrane. Its subcellular location is the early endosome membrane. Involved in neuronal migration during development of the cerebral neocortex. May function in a cell autonomous and a non-cell autonomous manner and play a role in appropriate adhesion between migrating neurons and radial glial fibers. May also regulate growth and differentiation of dendrites. This Rattus norvegicus (Rat) protein is Dyslexia-associated protein KIAA0319 homolog.